Consider the following 508-residue polypeptide: Photosystem II CP47 reaction center protein (508 aa).

6 helical membrane passes run 21-36 (SVHIMHTALVSGWAGS), 101-115 (IVFSGLCFLAAIWHW), 140-156 (GIHLFLSGVACFGFGAF), 203-218 (IAAGTLGILAGLFHLS), 237-252 (VLSSSIAAVFFAAFVV), and 457-472 (TFALLFFFGHIWHGAR).

It belongs to the PsbB/PsbC family. PsbB subfamily. PSII is composed of 1 copy each of membrane proteins PsbA, PsbB, PsbC, PsbD, PsbE, PsbF, PsbH, PsbI, PsbJ, PsbK, PsbL, PsbM, PsbT, PsbX, PsbY, PsbZ, Psb30/Ycf12, at least 3 peripheral proteins of the oxygen-evolving complex and a large number of cofactors. It forms dimeric complexes. Binds multiple chlorophylls. PSII binds additional chlorophylls, carotenoids and specific lipids. serves as cofactor.

It is found in the plastid. Its subcellular location is the chloroplast thylakoid membrane. Its function is as follows. One of the components of the core complex of photosystem II (PSII). It binds chlorophyll and helps catalyze the primary light-induced photochemical processes of PSII. PSII is a light-driven water:plastoquinone oxidoreductase, using light energy to abstract electrons from H(2)O, generating O(2) and a proton gradient subsequently used for ATP formation. The polypeptide is Photosystem II CP47 reaction center protein (Chloranthus spicatus (Chulantree)).